Here is a 268-residue protein sequence, read N- to C-terminus: MRASSKKKVLVFDSGVGGLSVFQEIHRLLPHMDYLYLFDNEAYPYGELDQDVLITRVNKLVAALVEEHQADIVVIACNTASTIVLPSLRANLSIPVVGVVPAIKPASLLASQGVGLIATPATVTRQYTHELIRDFAQGKPVELLGSTRLVDMAEEKLRGESISLSELESILLPLRNKVDVAVLGCTHFPLIKEEIHQALGGEVTLVDSGEAIARRVKALLLNAMKQESREEGSKKIYASAPPWQEDALNTCLANLGFNPVQVYRLPGV.

Substrate-binding positions include 13 to 14 (DS) and 45 to 46 (YG). The Proton donor/acceptor role is filled by Cys77. 78 to 79 (NT) serves as a coordination point for substrate. The active-site Proton donor/acceptor is the Cys185. 186–187 (TH) contributes to the substrate binding site.

This sequence belongs to the aspartate/glutamate racemases family.

The catalysed reaction is L-glutamate = D-glutamate. Its pathway is cell wall biogenesis; peptidoglycan biosynthesis. Provides the (R)-glutamate required for cell wall biosynthesis. The chain is Glutamate racemase from Vibrio campbellii (strain ATCC BAA-1116).